We begin with the raw amino-acid sequence, 297 residues long: E3 ubiquitin-protein ligase RNF212B (297 aa).

Residues 6–40 (CNQCFRKDGAHFFVTSCGHIFCKKCMTLEKCAVCG) form an RING-type zinc finger. A coiled-coil region spans residues 87–136 (LLIAFYKDRITKLEAAVKEAQEMAASQNKELSALRKENGELKKILDILKG). Disordered stretches follow at residues 152-179 (VGIT…RSSS) and 198-269 (RGLH…ESLP). A compositionally biased stretch (low complexity) spans 163–179 (PRPSSHHSSQVVSRSSS). A compositionally biased stretch (polar residues) spans 206–234 (PGDSYTETPSPASTHSLSYRPSSASSGQG).

In terms of assembly, homodimer. Autoubiquitinated.

It is found in the chromosome. It catalyses the reaction S-ubiquitinyl-[E2 ubiquitin-conjugating enzyme]-L-cysteine + [acceptor protein]-L-lysine = [E2 ubiquitin-conjugating enzyme]-L-cysteine + N(6)-ubiquitinyl-[acceptor protein]-L-lysine.. It functions in the pathway protein modification; protein ubiquitination. Its function is as follows. Ubiquitin E3 ligase that acts as a crucial factor for crossing-over (CO) formation during meiosis. Essential for normal prophase I progression and for ensuring appropriate CO designation in meiosis. Recruits key components of the cross-over machinery either directly ou indirectly, leading to the activation of the MutL-gamma complex. The function of RNF212B in CO designation is dependent on its catalytic activity. The sequence is that of E3 ubiquitin-protein ligase RNF212B (Rnf212b) from Mus musculus (Mouse).